Here is a 226-residue protein sequence, read N- to C-terminus: Cytidylate kinase (226 aa).

10-18 (GPASSGKST) contributes to the ATP binding site.

Belongs to the cytidylate kinase family. Type 1 subfamily.

It localises to the cytoplasm. It catalyses the reaction CMP + ATP = CDP + ADP. It carries out the reaction dCMP + ATP = dCDP + ADP. The chain is Cytidylate kinase from Streptococcus uberis (strain ATCC BAA-854 / 0140J).